The chain runs to 149 residues: Large ribosomal subunit protein uL13 (149 aa).

It belongs to the universal ribosomal protein uL13 family. In terms of assembly, part of the 50S ribosomal subunit.

Its function is as follows. This protein is one of the early assembly proteins of the 50S ribosomal subunit, although it is not seen to bind rRNA by itself. It is important during the early stages of 50S assembly. The protein is Large ribosomal subunit protein uL13 of Borrelia hermsii (strain HS1 / DAH).